The sequence spans 483 residues: Regulatory protein ViaA (483 aa).

The protein belongs to the ViaA family. As to quaternary structure, homodimer. Interacts with RavA.

It is found in the cytoplasm. Component of the RavA-ViaA chaperone complex, which may act on the membrane to optimize the function of some of the respiratory chains. ViaA stimulates the ATPase activity of RavA. This Salmonella arizonae (strain ATCC BAA-731 / CDC346-86 / RSK2980) protein is Regulatory protein ViaA.